The chain runs to 302 residues: Recombination-associated protein RdgC (302 aa).

This sequence belongs to the RdgC family.

It is found in the cytoplasm. Its subcellular location is the nucleoid. Its function is as follows. May be involved in recombination. This Tolumonas auensis (strain DSM 9187 / NBRC 110442 / TA 4) protein is Recombination-associated protein RdgC.